The primary structure comprises 37 residues: CNSKGTPCTNADECCGGKCAYNVWNCIGGGCSKTCGY.

Intrachain disulfides connect cysteine 1-cysteine 15, cysteine 8-cysteine 19, cysteine 14-cysteine 35, and cysteine 26-cysteine 31.

The protein belongs to the neurotoxin 13 (insecticidal toxin ABC) family. 01 (Aps III) subfamily. As to expression, expressed by the venom gland.

It localises to the secreted. In terms of biological role, the recombinant mu-cyrtautoxin-As1a potently and voltage-independently blocks voltage-gated sodium channels (Nav) of insects. It acts by pluging the outer vestibule of the channel. It acts in combination with a weak (30%) voltage-independent block of insect voltage-gated calcium (Cav) channels (low-voltage and high-voltage channels). Tested on DUM neurons, it inhibits sodium currents with an IC(50) of 540 nM (and a Hill coefficient &gt;1, reflecting an incomplete block at higher concentrations). In vivo, it induces flaccid paralysis in adult Australian sheep blowfly Lucilia cuprina. It is both paralytic and lethal, when injected into lepidopteran larvae. It is a slower acting toxin, being lethal at 24 hours, but not paralytic at 1 hour post-injection. This is Mu-cyrtautoxin-As1a from Apomastus schlingeri (Trap-door spider).